The primary structure comprises 261 residues: Putative ketoacyl reductase (261 aa).

NADP(+)-binding residues include T15, S16, I18, R38, G39, D63, V64, N90, Y157, K161, V190, and T192. The Proton acceptor role is filled by Y157.

The protein belongs to the short-chain dehydrogenases/reductases (SDR) family. Homotetramer.

It functions in the pathway antibiotic biosynthesis; actinorhodin biosynthesis. In Streptomyces coelicolor (strain ATCC BAA-471 / A3(2) / M145), this protein is Putative ketoacyl reductase (actIII).